Here is a 310-residue protein sequence, read N- to C-terminus: Glutaminase 1 (310 aa).

Substrate is bound by residues Ser-66, Asn-117, Glu-161, Asn-168, Tyr-192, Tyr-244, and Val-262. N6-acetyllysine is present on Lys-294.

The protein belongs to the glutaminase family. As to quaternary structure, homotetramer.

The catalysed reaction is L-glutamine + H2O = L-glutamate + NH4(+). The sequence is that of Glutaminase 1 from Shigella flexneri.